The primary structure comprises 130 residues: Small ribosomal subunit protein uS9 (130 aa).

Belongs to the universal ribosomal protein uS9 family.

The chain is Small ribosomal subunit protein uS9 from Aliivibrio fischeri (strain MJ11) (Vibrio fischeri).